The sequence spans 416 residues: Multifunctional CCA protein (416 aa).

Positions 8 and 11 each coordinate ATP. Residues Gly-8 and Arg-11 each contribute to the CTP site. Mg(2+)-binding residues include Asp-21 and Asp-23. The ATP site is built by Arg-91, Arg-137, and Arg-140. CTP-binding residues include Arg-91, Arg-137, and Arg-140. In terms of domain architecture, HD spans 228-329 (TGVHTLMVLA…VKIFDKADFW (102 aa)).

The protein belongs to the tRNA nucleotidyltransferase/poly(A) polymerase family. Bacterial CCA-adding enzyme type 1 subfamily. As to quaternary structure, monomer. Can also form homodimers and oligomers. Mg(2+) serves as cofactor. It depends on Ni(2+) as a cofactor.

It carries out the reaction a tRNA precursor + 2 CTP + ATP = a tRNA with a 3' CCA end + 3 diphosphate. It catalyses the reaction a tRNA with a 3' CCA end + 2 CTP + ATP = a tRNA with a 3' CCACCA end + 3 diphosphate. Catalyzes the addition and repair of the essential 3'-terminal CCA sequence in tRNAs without using a nucleic acid template. Adds these three nucleotides in the order of C, C, and A to the tRNA nucleotide-73, using CTP and ATP as substrates and producing inorganic pyrophosphate. tRNA 3'-terminal CCA addition is required both for tRNA processing and repair. Also involved in tRNA surveillance by mediating tandem CCA addition to generate a CCACCA at the 3' terminus of unstable tRNAs. While stable tRNAs receive only 3'-terminal CCA, unstable tRNAs are marked with CCACCA and rapidly degraded. The protein is Multifunctional CCA protein of Shewanella baltica (strain OS223).